The following is a 541-amino-acid chain: GPI alpha-1,2-mannosyltransferase 3 (541 aa).

N-linked (GlcNAc...) asparagine glycosylation occurs at asparagine 18. The next 9 helical transmembrane spans lie at 53 to 73 (LVLF…TSFV), 126 to 146 (VHLL…IADL), 182 to 202 (LTNT…PLEG), 214 to 234 (LVAL…PLLF), 245 to 265 (DLIL…SLII), 305 to 325 (GFPA…FLAP), 330 to 350 (IFLV…HKEF), 352 to 372 (FIYP…NNLK), and 377 to 397 (PALS…GLVH). N-linked (GlcNAc...) asparagine glycosylation occurs at asparagine 417.

Belongs to the glycosyltransferase 22 family. PIGB subfamily.

It localises to the endoplasmic reticulum membrane. It functions in the pathway glycolipid biosynthesis; glycosylphosphatidylinositol-anchor biosynthesis. Alpha-1,2-mannosyltransferase that catalyzes the transfer of the third mannose, via an alpha-1,2 bond, from a dolichol-phosphate-mannose (Dol-P-Man) to an alpha-D-Man-(1-&gt;6)-2-PEtn-alpha-D-Man-(1-&gt;4)-alpha-D-GlcN-(1-&gt;6)-(1-radyl,2-acyl-sn-glycero-3-phospho)-2-acyl-inositol intermediate to generate an alpha-D-Man-(1-&gt;2)-alpha-D-Man-(1-&gt;6)-2-PEtn-alpha-D-Man-(1-&gt;4)-alpha-D-GlcN-(1-&gt;6)-(1-radyl,2-acyl-sn-glycero-3-phospho)-2-acyl-inositol (also termed H6) and participates in the nineth step of the glycosylphosphatidylinositol-anchor biosynthesis. May also add the third mannose to an alpha-D-Man-(1-&gt;6)-alpha-D-Man-(1-&gt;4)-alpha-D-GlcN-(1-&gt;6)-(1-radyl,2-acyl-sn-glycero-3-phospho)-2-acyl-inositol (also termed H3) intermediate generating an alpha-D-Man-(1-&gt;2)-alpha-D-Man-(1-&gt;6)-alpha-D-Man-(1-&gt;4)-alpha-D-GlcN-(1-&gt;6)-(1-radyl,2-acyl-sn-glycero-3-phospho)-2-acyl-inositol (also termed H4). This is GPI alpha-1,2-mannosyltransferase 3 from Bos taurus (Bovine).